The primary structure comprises 342 residues: Bifunctional terpene synthase Agr4 (342 aa).

The Mg(2+) site is built by D87, N222, S226, and E230. Residues 87–91 (DEVSD) carry the DDXXD motif motif. Residues R308 and Y309 each coordinate (2E,6E)-farnesyl diphosphate.

This sequence belongs to the terpene synthase family. The cofactor is Mg(2+).

It catalyses the reaction (2E,6E)-farnesyl diphosphate = delta-cadinene + diphosphate. The catalysed reaction is (2E,6E)-farnesyl diphosphate = gamma-muurolene + diphosphate. It carries out the reaction (2E,6E)-farnesyl diphosphate = beta-copaene + diphosphate. The enzyme catalyses (2E)-geranyl diphosphate = beta-myrcene + diphosphate. Its function is as follows. Terpene cyclase that catalyzes the cyclization of farnesyl diphosphate (FPP) to various sesquiterpenes, including beta-copaene, alpha-cubebene, cadina-1(6),4-diene, gamma-muurolene, delta-cadinene, epizonarene, epicubenol and cubenol. Agr4 is also able to use the monoterpene precursor geranyl diphosphate (GPP) as substrates to synthesize the monoterpene beta-myrcene. Delta-cadinene is the major product of Agr4. The chain is Bifunctional terpene synthase Agr4 from Cyclocybe aegerita (Black poplar mushroom).